Reading from the N-terminus, the 511-residue chain is TNF receptor-associated factor family protein DDB_G0290931 (511 aa).

The RING-type; degenerate zinc-finger motif lies at Cys27 to Arg67. The stretch at Ile103–Gly169 forms a coiled coil. The interval Asn107–Lys159 is disordered. Residues Glu109–Glu155 are compositionally biased toward acidic residues. 2 TRAF-type zinc fingers span residues Arg181–Leu234 and Asn236–Gln293. A coiled-coil region spans residues Glu324–Tyr358. The region spanning Gly374–Val499 is the MATH domain.

Belongs to the TNF receptor-associated factor family. A subfamily.

Its subcellular location is the cytoplasm. Probable adapter protein and signal transducer that links members of the tumor necrosis factor receptor family to different signaling pathways by association with the receptor cytoplasmic domain and kinases. The polypeptide is TNF receptor-associated factor family protein DDB_G0290931 (Dictyostelium discoideum (Social amoeba)).